Here is a 610-residue protein sequence, read N- to C-terminus: Elongation factor 4 (610 aa).

The region spanning 15-197 (KSIRNFSIIA…RIINDIPYPK (183 aa)) is the tr-type G domain. GTP contacts are provided by residues 27 to 32 (DHGKST) and 144 to 147 (NKID).

Belongs to the TRAFAC class translation factor GTPase superfamily. Classic translation factor GTPase family. LepA subfamily.

It is found in the cell membrane. The enzyme catalyses GTP + H2O = GDP + phosphate + H(+). Its function is as follows. Required for accurate and efficient protein synthesis under certain stress conditions. May act as a fidelity factor of the translation reaction, by catalyzing a one-codon backward translocation of tRNAs on improperly translocated ribosomes. Back-translocation proceeds from a post-translocation (POST) complex to a pre-translocation (PRE) complex, thus giving elongation factor G a second chance to translocate the tRNAs correctly. Binds to ribosomes in a GTP-dependent manner. The sequence is that of Elongation factor 4 from Buchnera aphidicola subsp. Acyrthosiphon pisum (strain 5A).